The chain runs to 205 residues: Adenylyl-sulfate kinase (205 aa).

31–38 contacts ATP; sequence GLSGAGKS. Ser-105 serves as the catalytic Phosphoserine intermediate.

This sequence belongs to the APS kinase family.

The catalysed reaction is adenosine 5'-phosphosulfate + ATP = 3'-phosphoadenylyl sulfate + ADP + H(+). Its pathway is sulfur metabolism; hydrogen sulfide biosynthesis; sulfite from sulfate: step 2/3. Functionally, catalyzes the synthesis of activated sulfate. The polypeptide is Adenylyl-sulfate kinase (Shewanella baltica (strain OS155 / ATCC BAA-1091)).